The chain runs to 338 residues: Lipoate-protein ligase A (338 aa).

Positions 29-216 (PATQRVLFLW…AFFAHYGERV (188 aa)) constitute a BPL/LPL catalytic domain. Residues Arg71, 76 to 79 (GAVF), and Lys134 contribute to the ATP site. Lys134 serves as a coordination point for (R)-lipoate.

Belongs to the LplA family. As to quaternary structure, monomer.

It is found in the cytoplasm. The enzyme catalyses L-lysyl-[lipoyl-carrier protein] + (R)-lipoate + ATP = N(6)-[(R)-lipoyl]-L-lysyl-[lipoyl-carrier protein] + AMP + diphosphate + H(+). Its pathway is protein modification; protein lipoylation via exogenous pathway; protein N(6)-(lipoyl)lysine from lipoate: step 1/2. The protein operates within protein modification; protein lipoylation via exogenous pathway; protein N(6)-(lipoyl)lysine from lipoate: step 2/2. Its function is as follows. Catalyzes both the ATP-dependent activation of exogenously supplied lipoate to lipoyl-AMP and the transfer of the activated lipoyl onto the lipoyl domains of lipoate-dependent enzymes. The polypeptide is Lipoate-protein ligase A (Salmonella typhimurium (strain LT2 / SGSC1412 / ATCC 700720)).